The primary structure comprises 317 residues: tRNA dimethylallyltransferase (317 aa).

21-28 (GPTASGKS) lines the ATP pocket. Residue 23-28 (TASGKS) coordinates substrate. The interval 46-49 (DSMQ) is interaction with substrate tRNA.

Belongs to the IPP transferase family. Monomer. Mg(2+) is required as a cofactor.

It carries out the reaction adenosine(37) in tRNA + dimethylallyl diphosphate = N(6)-dimethylallyladenosine(37) in tRNA + diphosphate. In terms of biological role, catalyzes the transfer of a dimethylallyl group onto the adenine at position 37 in tRNAs that read codons beginning with uridine, leading to the formation of N6-(dimethylallyl)adenosine (i(6)A). This Nitrobacter hamburgensis (strain DSM 10229 / NCIMB 13809 / X14) protein is tRNA dimethylallyltransferase.